A 312-amino-acid polypeptide reads, in one-letter code: tRNA dimethylallyltransferase (312 aa).

Residue 17-24 coordinates ATP; it reads GPTASGKT. Substrate is bound at residue 19–24; the sequence is TASGKT. 3 interaction with substrate tRNA regions span residues 42-45, 166-170, and 247-252; these read DSAL, QRLLR, and RCVGYR.

This sequence belongs to the IPP transferase family. Monomer. Mg(2+) serves as cofactor.

The enzyme catalyses adenosine(37) in tRNA + dimethylallyl diphosphate = N(6)-dimethylallyladenosine(37) in tRNA + diphosphate. Catalyzes the transfer of a dimethylallyl group onto the adenine at position 37 in tRNAs that read codons beginning with uridine, leading to the formation of N6-(dimethylallyl)adenosine (i(6)A). The protein is tRNA dimethylallyltransferase of Sodalis glossinidius (strain morsitans).